The primary structure comprises 78 residues: Large ribosomal subunit protein bL28 (78 aa).

The interval 1–21 (MSRVCQVTGKKPMVGNNRSHA) is disordered.

This sequence belongs to the bacterial ribosomal protein bL28 family.

The polypeptide is Large ribosomal subunit protein bL28 (Shewanella baltica (strain OS223)).